The following is a 216-amino-acid chain: Adenylate kinase (216 aa).

11–16 serves as a coordination point for ATP; that stretch reads GSGKGT. The NMP stretch occupies residues 31–60; sequence ATGDLFRKAIERGDELGDTVKSYMERGELV. Residues threonine 32, arginine 37, 58-60, 86-89, and glutamine 93 contribute to the AMP site; these read ELV and GFPR. The LID stretch occupies residues 127–163; that stretch reads GRWVCRSCQSPYQCGCAEVAEGKCSRCQGELYQRPDD. Residue arginine 128 coordinates ATP. Zn(2+) is bound by residues cysteine 131, cysteine 134, cysteine 150, and cysteine 153. The AMP site is built by arginine 160 and arginine 171. Position 199 (alanine 199) interacts with ATP.

It belongs to the adenylate kinase family. Monomer.

Its subcellular location is the cytoplasm. The enzyme catalyses AMP + ATP = 2 ADP. Its pathway is purine metabolism; AMP biosynthesis via salvage pathway; AMP from ADP: step 1/1. Its function is as follows. Catalyzes the reversible transfer of the terminal phosphate group between ATP and AMP. Plays an important role in cellular energy homeostasis and in adenine nucleotide metabolism. The chain is Adenylate kinase from Dehalococcoides mccartyi (strain ATCC BAA-2266 / KCTC 15142 / 195) (Dehalococcoides ethenogenes (strain 195)).